We begin with the raw amino-acid sequence, 610 residues long: UvrABC system protein C (610 aa).

The region spanning 16–94 (HQPGVYRMYN…IKQYLPKYNV (79 aa)) is the GIY-YIG domain. The UVR domain occupies 204 to 239 (NQVLELLVQKMEIASQQLKFEDAAKFRDQIQAIRRV).

The protein belongs to the UvrC family. As to quaternary structure, interacts with UvrB in an incision complex.

It localises to the cytoplasm. Its function is as follows. The UvrABC repair system catalyzes the recognition and processing of DNA lesions. UvrC both incises the 5' and 3' sides of the lesion. The N-terminal half is responsible for the 3' incision and the C-terminal half is responsible for the 5' incision. The protein is UvrABC system protein C of Vibrio vulnificus (strain CMCP6).